The primary structure comprises 441 residues: Ribosomal protein uS12 methylthiotransferase RimO (441 aa).

In terms of domain architecture, MTTase N-terminal spans 7–117 (PKVSFVSLGC…VLDAVHRALP (111 aa)). Residues Cys-16, Cys-52, Cys-81, Cys-148, Cys-152, and Cys-155 each coordinate [4Fe-4S] cluster. The 238-residue stretch at 134–371 (LTPRHYAYLK…MARQQKISAR (238 aa)) folds into the Radical SAM core domain. A TRAM domain is found at 374-440 (KRKVGTRQQV…AYDLHGSVAG (67 aa)).

Belongs to the methylthiotransferase family. RimO subfamily. The cofactor is [4Fe-4S] cluster.

The protein resides in the cytoplasm. It catalyses the reaction L-aspartate(89)-[ribosomal protein uS12]-hydrogen + (sulfur carrier)-SH + AH2 + 2 S-adenosyl-L-methionine = 3-methylsulfanyl-L-aspartate(89)-[ribosomal protein uS12]-hydrogen + (sulfur carrier)-H + 5'-deoxyadenosine + L-methionine + A + S-adenosyl-L-homocysteine + 2 H(+). Its function is as follows. Catalyzes the methylthiolation of an aspartic acid residue of ribosomal protein uS12. This Rhodopseudomonas palustris (strain BisB18) protein is Ribosomal protein uS12 methylthiotransferase RimO.